A 1081-amino-acid chain; its full sequence is MVSPPGVLSSLLLLAAMAGGSSQQCSEGRTYSDAIISPNPETIRIMRVSQTFSVGDCTAACCDLLTCDLAWWFEGSCYLVKCMRSENCEPRTTGPIRSYLTFVRRPVQRPGQLLDYGDMMLSRGSPSGAWGDSLEDLRKDLPFLGKDGGPEETTEYSDEYKDLERGLLQPSNQQDPRGSAEYPDWSLLPSNEGGFNATATGDNSAASMEKLQDPTPHPLDQEQLQALNESTWSPTPGHSSISSVWPSSASPLPTEEGLEGEETLQLQEQPSNSSGKEVPMPSHNPSPASLESSPATTEKNSNFTVTPRSRKHSTPTFPTSTVLTGLTPPPWPLSPTASRTVKALAVSAGDNLVLTLPDREAELKASVEPAPPADTTYSYEWSLMSHPVDFQGKIKQENKPTLHLSQLSVGLYAFRVAVSSENAFGEGYVNVTVMPAARVNQPPVAVVSPQTQELSVPLTSALIDGSQSTDDTEIVSYHWEEVDGPFLGEEFPADTPILRLSNLVPGNYTFRLTITDSDGATNSTTASLVIRDAVDYPPVANAGPNQTITLPQNTIILNGNQSSDDHQIVLYEWFAGPGGESKEMVMQGAQTPYLHLSELQEGEYTFQLMVTDSSGQQSTALVAVTVQAENNQAPVAVAGPDKELVFPVQSATLDGSRSSDDHGIVCYHWEHIRGPSAVEMENVDKAIATVTGLQVGIYHFRLTVRDQQGLSSTSTLTVAVKKENNSPPRAQAGGRHVLILPNNSITLDGSRSTDDRGIVSYLWIRDGQSPAAGDVIGGSDHRAALQLTNLVEGVYTFHLLVTDSQGASDSDAATVEVLPDPKKDGLVELILQVGVEQLTEQQKETLVRQLAVLLNVLDSDVKVLKIQAHTDVSTVIVFYVQSGSPFKVLRAAAVARNLHKRLSKEKEAFLLFKVLRVDTAGCLLKCSGHGHCDPITKRCICSQLWMENLIQRYMWDGESNCEWSVFYVAALALTLTLLTGAVSWLCICCCRRRKRTKIRKKTKYTILDSMDEQERMELRPKYGIKHRSTEHNSSLMVSESEFESDQDTLFSRERMERGVLKGSLNGCARNGVSFGYYSKDR.

Positions 1-22 (MVSPPGVLSSLLLLAAMAGGSS) are cleaved as a signal peptide. Positions 23–99 (QQCSEGRTYS…PRTTGPIRSY (77 aa)) constitute an MANSC domain. Topologically, residues 23–964 (QQCSEGRTYS…WDGESNCEWS (942 aa)) are extracellular. Positions 168 to 331 (LQPSNQQDPR…VLTGLTPPPW (164 aa)) are disordered. N-linked (GlcNAc...) asparagine glycosylation is present at asparagine 196. 2 stretches are compositionally biased toward polar residues: residues 197–206 (ATATGDNSAA) and 222–234 (EQLQALNESTWSP). The N-linked (GlcNAc...) asparagine glycan is linked to asparagine 228. The span at 236–255 (PGHSSISSVWPSSASPLPTE) shows a compositional bias: low complexity. Asparagine 272 and asparagine 302 each carry an N-linked (GlcNAc...) asparagine glycan. Composition is skewed to polar residues over residues 283–307 (HNPSPASLESSPATTEKNSNFTVTP) and 314–324 (TPTFPTSTVLT). PKD domains are found at residues 345-436 (AVSA…VMPA), 444-533 (VAVV…IRDA), 539-629 (VANA…VQAE), 630-723 (NNQA…VKKE), and 729-820 (RAQA…VLPD). 5 N-linked (GlcNAc...) asparagine glycosylation sites follow: asparagine 430, asparagine 507, asparagine 522, asparagine 545, and asparagine 560. N-linked (GlcNAc...) asparagine glycosylation occurs at asparagine 742. Residues 965 to 985 (VFYVAALALTLTLLTGAVSWL) form a helical membrane-spanning segment. Residues 986–1081 (CICCCRRRKR…VSFGYYSKDR (96 aa)) are Cytoplasmic-facing. Residues 1004 to 1007 (YTIL) carry the Endocytosis signal motif. Position 1009 is a phosphoserine (serine 1009).

In terms of assembly, homodimer. Interacts with AP2M1; required for clathrin-mediated endocytosis. Post-translationally, N-glycosylated. In terms of processing, O-glycosylated. Shedding of the extracellular domain and intramembrane cleavage produce several proteolytic products. The intramembrane cleavage releases a soluble cytoplasmic polypeptide that translocates to the nucleolus.

It is found in the cell membrane. It localises to the early endosome membrane. Functionally, involved in neuronal migration during development of the cerebral neocortex. May function in a cell autonomous and a non-cell autonomous manner and play a role in appropriate adhesion between migrating neurons and radial glial fibers. May also regulate growth and differentiation of dendrites. In Mus musculus (Mouse), this protein is Dyslexia-associated protein KIAA0319 homolog (Kiaa0319).